Here is a 114-residue protein sequence, read N- to C-terminus: Large ribosomal subunit protein uL22 (114 aa).

This sequence belongs to the universal ribosomal protein uL22 family. As to quaternary structure, part of the 50S ribosomal subunit.

Functionally, this protein binds specifically to 23S rRNA; its binding is stimulated by other ribosomal proteins, e.g. L4, L17, and L20. It is important during the early stages of 50S assembly. It makes multiple contacts with different domains of the 23S rRNA in the assembled 50S subunit and ribosome. In terms of biological role, the globular domain of the protein is located near the polypeptide exit tunnel on the outside of the subunit, while an extended beta-hairpin is found that lines the wall of the exit tunnel in the center of the 70S ribosome. The polypeptide is Large ribosomal subunit protein uL22 (Mycoplasmopsis agalactiae (strain NCTC 10123 / CIP 59.7 / PG2) (Mycoplasma agalactiae)).